The following is a 781-amino-acid chain: MVPPSKKRKLPAATGPATKRSKNIPKPSSSKKKSGKESRSTVEAGALSWASVGEDFGGLEVIEGVDVVKDGNRVQFLVSGDKNKSNIIDPQQEVVDGDRPFEGFGDDAVEVGDIDSGEVGSDQAGAESKKPQGKNKGKNEPKEGQEKADQETNKKQKQKQNKNKLDGKNGAGNKQDEQLVKAAQGVQKSSTRGGNTFGALADGNDYKDQEDVDMAAWVSLNLSPQIISAIAKLKFMKPTKIQKRTIPEIVAGHDVIGKAQTGSGKTLAFGIPMVERWLEMQEQGVKRTGPMSLVLSPTRELAKQLGDHLKALCDGLPSAPYVCVVTGGLSILKQQRQLEKADIVIGTPGRLWEVLSGDRALQSKFAKIRFLVVDEADRLFKVGQFKEAEDIIGALDGKSPGDDAESEEESDEEDEDDEDAARQTLVFSATFDKDLQTKLAGKGKSSGNDDEKMAYLMKCLKFRGEPKFIDVNPVSQMAEGLREGLIECGAMEKDLYLYTVLILNPGRRTLVFTNSISAVRRLTPLLTNLNLTALPLHSQMAQKARHRSLERFTASRNSILIATDVAARGLDIKEVDQVLHYHVPRSADTYIHRSGRTARGESSGISVILCAPEEVLPTRRLASKVHAVRSAGVKREHFIQTLLIDRKAASRLKPRVDLAKKIADTILAKEKAHSDDTWLRNAADELGVEYDSDDLEEINAGGGKGGRGGGRKRKEQTAKQLTKAEMGALKAQLREELSRRVNLGVSERYITGGRVDVGALLREGQQGGMFLGNTDGLGFDL.

Composition is skewed to basic residues over residues 1-10 (MVPPSKKRKL) and 19-34 (KRSKNIPKPSSSKKKS). 2 disordered regions span residues 1 to 47 (MVPP…AGAL) and 79 to 196 (SGDK…GGNT). Positions 104 to 116 (FGDDAVEVGDIDS) are enriched in acidic residues. The span at 137 to 154 (GKNEPKEGQEKADQETNK) shows a compositional bias: basic and acidic residues. The short motif at 215–243 (AAWVSLNLSPQIISAIAKLKFMKPTKIQK) is the Q motif element. The 204-residue stretch at 246–449 (IPEIVAGHDV…AGKGKSSGND (204 aa)) folds into the Helicase ATP-binding domain. Residue 259–266 (AQTGSGKT) participates in ATP binding. A DEAD box motif is present at residues 374–377 (DEAD). The interval 394 to 419 (ALDGKSPGDDAESEEESDEEDEDDED) is disordered. Positions 402-419 (DDAESEEESDEEDEDDED) are enriched in acidic residues. The region spanning 494–643 (DLYLYTVLIL…KREHFIQTLL (150 aa)) is the Helicase C-terminal domain. Residues 697–721 (EINAGGGKGGRGGGRKRKEQTAKQL) form a disordered region.

Belongs to the DEAD box helicase family. DDX24/MAK5 subfamily.

The protein resides in the nucleus. The protein localises to the nucleolus. It catalyses the reaction ATP + H2O = ADP + phosphate + H(+). ATP-binding RNA helicase involved in the biogenesis of 60S ribosomal subunits and is required for the normal formation of 25S and 5.8S rRNAs. The polypeptide is ATP-dependent RNA helicase MAK5 (MAK5) (Gibberella zeae (strain ATCC MYA-4620 / CBS 123657 / FGSC 9075 / NRRL 31084 / PH-1) (Wheat head blight fungus)).